Here is a 291-residue protein sequence, read N- to C-terminus: Probable endonuclease 4 (291 aa).

Zn(2+)-binding residues include histidine 72, histidine 112, glutamate 147, aspartate 181, histidine 184, histidine 215, aspartate 228, histidine 230, and glutamate 260.

It belongs to the AP endonuclease 2 family. Requires Zn(2+) as cofactor.

The enzyme catalyses Endonucleolytic cleavage to 5'-phosphooligonucleotide end-products.. Its function is as follows. Endonuclease IV plays a role in DNA repair. It cleaves phosphodiester bonds at apurinic or apyrimidinic (AP) sites, generating a 3'-hydroxyl group and a 5'-terminal sugar phosphate. This Mycoplasma genitalium (strain ATCC 33530 / DSM 19775 / NCTC 10195 / G37) (Mycoplasmoides genitalium) protein is Probable endonuclease 4.